The chain runs to 37 residues: Large ribosomal subunit protein bL36c (37 aa).

This sequence belongs to the bacterial ribosomal protein bL36 family.

It localises to the plastid. The protein localises to the chloroplast. The chain is Large ribosomal subunit protein bL36c from Liriodendron tulipifera (Tuliptree).